Consider the following 124-residue polypeptide: MARIAGVDLPRDKRIEAALPYIYGIGWSLSREILKKTGIDPDTRVRDLTEEQVAKLREVIDHEYKVEGDLQREVQMNIKRLIEIGCYRGLRHRRGLPVRGQRTKTNARTRKGPRRTVAGKKKAK.

A disordered region spans residues 96–124; that stretch reads LPVRGQRTKTNARTRKGPRRTVAGKKKAK.

This sequence belongs to the universal ribosomal protein uS13 family. As to quaternary structure, part of the 30S ribosomal subunit. Forms a loose heterodimer with protein S19. Forms two bridges to the 50S subunit in the 70S ribosome.

In terms of biological role, located at the top of the head of the 30S subunit, it contacts several helices of the 16S rRNA. In the 70S ribosome it contacts the 23S rRNA (bridge B1a) and protein L5 of the 50S subunit (bridge B1b), connecting the 2 subunits; these bridges are implicated in subunit movement. Contacts the tRNAs in the A and P-sites. The chain is Small ribosomal subunit protein uS13 from Symbiobacterium thermophilum (strain DSM 24528 / JCM 14929 / IAM 14863 / T).